A 194-amino-acid chain; its full sequence is Holliday junction branch migration complex subunit RuvA (194 aa).

Positions 1 to 64 are domain I; it reads MIGRLRGILA…EDSVSLYGFL (64 aa). The interval 65-140 is domain II; it reads REGERRLFRD…RAADFSSGAP (76 aa). A flexible linker region spans residues 140 to 144; the sequence is PITGQ. The domain III stretch occupies residues 145 to 194; sequence LGPDAISEATVALQQLGYKPAEAARMARDAGAEGGEVATVIRKALQAALR.

This sequence belongs to the RuvA family. As to quaternary structure, homotetramer. Forms an RuvA(8)-RuvB(12)-Holliday junction (HJ) complex. HJ DNA is sandwiched between 2 RuvA tetramers; dsDNA enters through RuvA and exits via RuvB. An RuvB hexamer assembles on each DNA strand where it exits the tetramer. Each RuvB hexamer is contacted by two RuvA subunits (via domain III) on 2 adjacent RuvB subunits; this complex drives branch migration. In the full resolvosome a probable DNA-RuvA(4)-RuvB(12)-RuvC(2) complex forms which resolves the HJ.

It localises to the cytoplasm. Its function is as follows. The RuvA-RuvB-RuvC complex processes Holliday junction (HJ) DNA during genetic recombination and DNA repair, while the RuvA-RuvB complex plays an important role in the rescue of blocked DNA replication forks via replication fork reversal (RFR). RuvA specifically binds to HJ cruciform DNA, conferring on it an open structure. The RuvB hexamer acts as an ATP-dependent pump, pulling dsDNA into and through the RuvAB complex. HJ branch migration allows RuvC to scan DNA until it finds its consensus sequence, where it cleaves and resolves the cruciform DNA. The protein is Holliday junction branch migration complex subunit RuvA of Xanthomonas oryzae pv. oryzae (strain MAFF 311018).